Here is a 185-residue protein sequence, read N- to C-terminus: Acireductone dioxygenase (185 aa).

Fe(2+) contacts are provided by His97, His99, Glu103, and His141. Positions 97, 99, 103, and 141 each coordinate Ni(2+).

This sequence belongs to the acireductone dioxygenase (ARD) family. In terms of assembly, monomer. Requires Fe(2+) as cofactor. The cofactor is Ni(2+).

It carries out the reaction 1,2-dihydroxy-5-(methylsulfanyl)pent-1-en-3-one + O2 = 3-(methylsulfanyl)propanoate + CO + formate + 2 H(+). The enzyme catalyses 1,2-dihydroxy-5-(methylsulfanyl)pent-1-en-3-one + O2 = 4-methylsulfanyl-2-oxobutanoate + formate + 2 H(+). The protein operates within amino-acid biosynthesis; L-methionine biosynthesis via salvage pathway; L-methionine from S-methyl-5-thio-alpha-D-ribose 1-phosphate: step 5/6. Functionally, catalyzes 2 different reactions between oxygen and the acireductone 1,2-dihydroxy-3-keto-5-methylthiopentene (DHK-MTPene) depending upon the metal bound in the active site. Fe-containing acireductone dioxygenase (Fe-ARD) produces formate and 2-keto-4-methylthiobutyrate (KMTB), the alpha-ketoacid precursor of methionine in the methionine recycle pathway. Ni-containing acireductone dioxygenase (Ni-ARD) produces methylthiopropionate, carbon monoxide and formate, and does not lie on the methionine recycle pathway. The polypeptide is Acireductone dioxygenase (Stenotrophomonas maltophilia (strain R551-3)).